Reading from the N-terminus, the 217-residue chain is uncharacterized protein (217 aa).

4 helical membrane passes run 9–29 (ISLA…LSTI), 54–74 (FLST…LLEL), 103–125 (LMAY…RFLS), and 135–157 (IVFW…ASYI).

It belongs to the DP1 family.

It is found in the endoplasmic reticulum membrane. This is an uncharacterized protein from Schizosaccharomyces pombe (strain 972 / ATCC 24843) (Fission yeast).